We begin with the raw amino-acid sequence, 274 residues long: 3-methyl-2-oxobutanoate hydroxymethyltransferase (274 aa).

The Mg(2+) site is built by Asp54 and Asp93. 3-methyl-2-oxobutanoate is bound by residues 54–55 (DS), Asp93, and Lys121. Glu123 serves as a coordination point for Mg(2+). Glu190 functions as the Proton acceptor in the catalytic mechanism.

The protein belongs to the PanB family. Homodecamer; pentamer of dimers. It depends on Mg(2+) as a cofactor.

It localises to the cytoplasm. It catalyses the reaction 3-methyl-2-oxobutanoate + (6R)-5,10-methylene-5,6,7,8-tetrahydrofolate + H2O = 2-dehydropantoate + (6S)-5,6,7,8-tetrahydrofolate. Its pathway is cofactor biosynthesis; (R)-pantothenate biosynthesis; (R)-pantoate from 3-methyl-2-oxobutanoate: step 1/2. Functionally, catalyzes the reversible reaction in which hydroxymethyl group from 5,10-methylenetetrahydrofolate is transferred onto alpha-ketoisovalerate to form ketopantoate. The chain is 3-methyl-2-oxobutanoate hydroxymethyltransferase from Ralstonia nicotianae (strain ATCC BAA-1114 / GMI1000) (Ralstonia solanacearum).